Reading from the N-terminus, the 419-residue chain is Transcription factor 7 (419 aa).

Positions 1 to 12 are enriched in gly residues; sequence MPQLDSGGGGAG. A CTNNB1-binding region spans residues 1-60; the sequence is MPQLDSGGGGAGRGDDLGAPDELLAFQDEGEEQDDKNRDSPVGPERDLAELKSSLVNESE. Disordered stretches follow at residues 1–111 and 134–200; these read MPQL…LKAP and PASG…SGFY. Composition is skewed to basic and acidic residues over residues 35 to 50 and 86 to 109; these read DKNRDSPVGPERDLAE and LGREHTSQRLFPDKLPESLEDGLK. Pro residues predominate over residues 143–158; sequence QPQPPLHNKPGQPPHG. Residues 304-372 constitute a DNA-binding region (HMG box); it reads IKKPLNAFML…LHMQLYPGWS (69 aa). A disordered region spans residues 374-406; that stretch reads RDNYGKKKRRSREKHQESTTGGKRNAFGTYPEK. Residues 379 to 385 carry the Nuclear localization signal motif; that stretch reads KKKRRSR.

The protein belongs to the TCF/LEF family. Binds the armadillo repeat of CTNNB1 and forms a stable complex. Binds TLE5, TLE1, TLE2, TLE3 and TLE4. Interacts with MLLT11. Interacts with DAZAP2. In terms of assembly, interacts (via N-terminus) with SOX13; inhibits WNT-mediated transcriptional activity. In terms of tissue distribution, T-cell specific. Expressed in triple negative 2 subpopulations of T-cells and both the gamma-delta and alpha-beta T-cell lineages. Expressed in Il7 receptor positive innate-like T-cells in the mesenteric lymph nodes and spleen (at protein level).

The protein resides in the nucleus. In terms of biological role, transcriptional activator involved in T-cell lymphocyte differentiation. Necessary for the survival of CD4(+) CD8(+) immature thymocytes. Isoforms lacking the N-terminal CTNNB1 binding domain cannot fulfill this role. Binds to the T-lymphocyte-specific enhancer element (5'-WWCAAAG-3') found in the promoter of the CD3E gene. Represses expression of the T-cell receptor gamma gene in alpha-beta T-cell lineages. Inhibits the developmental program of IL17A effector gamma-delta T-cell subsets via regulating the transcription of T-cell lineage effector proteins. Required for the development of natural killer receptor-positive lymphoid tissue inducer T-cells. TLE1, TLE2, TLE3 and TLE4 repress transactivation mediated by TCF7 and CTNNB1. May also act as feedback transcriptional repressor of CTNNB1 and TCF7L2 target genes. The sequence is that of Transcription factor 7 from Mus musculus (Mouse).